Here is a 511-residue protein sequence, read N- to C-terminus: Inactive cytochrome P450 monooxygenase cloA (511 aa).

The chain crosses the membrane as a helical span at residues I17–L37. 2 N-linked (GlcNAc...) asparagine glycosylation sites follow: N81 and N344. C450 provides a ligand contact to heme.

This sequence belongs to the cytochrome P450 family. Heme is required as a cofactor.

It localises to the membrane. In terms of biological role, inactive cytochrome P450 monooxygenase; part of the gene cluster that mediates the biosynthesis of fungal ergot alkaloid. DmaW catalyzes the first step of ergot alkaloid biosynthesis by condensing dimethylallyl diphosphate (DMAP) and tryptophan to form 4-dimethylallyl-L-tryptophan. The second step is catalyzed by the methyltransferase easF that methylates 4-dimethylallyl-L-tryptophan in the presence of S-adenosyl-L-methionine, resulting in the formation of 4-dimethylallyl-L-abrine. The catalase easC and the FAD-dependent oxidoreductase easE then transform 4-dimethylallyl-L-abrine to chanoclavine-I which is further oxidized by easD in the presence of NAD(+), resulting in the formation of chanoclavine-I aldehyde. Agroclavine dehydrogenase easG then mediates the conversion of chanoclavine-I aldehyde to agroclavine via a non-enzymatic adduct reaction: the substrate is an iminium intermediate that is formed spontaneously from chanoclavine-I aldehyde in the presence of glutathione. Further conversion of agroclavine to paspalic acid is a two-step process involving oxidation of agroclavine to elymoclavine and of elymoclavine to paspalic acid, the second step being performed by the elymoclavine oxidase cloA. However, cloA does not encode a functional enzyme indicating that C.fusiformis terminates its ergot alkaloid pathway at elymoclavine. This Claviceps fusiformis (Ergot fungus) protein is Inactive cytochrome P450 monooxygenase cloA.